The chain runs to 215 residues: Redox-sensing transcriptional repressor Rex (215 aa).

A DNA-binding region (H-T-H motif) is located at residues 18 to 57 (LYYRFLKNLHASGKQRVSSAELSDAVKVDSATIRRDFSYF). Residue 92-97 (GVGNLG) coordinates NAD(+).

Belongs to the transcriptional regulatory Rex family. Homodimer.

The protein localises to the cytoplasm. Modulates transcription in response to changes in cellular NADH/NAD(+) redox state. This chain is Redox-sensing transcriptional repressor Rex, found in Bacillus velezensis (strain DSM 23117 / BGSC 10A6 / LMG 26770 / FZB42) (Bacillus amyloliquefaciens subsp. plantarum).